A 118-amino-acid chain; its full sequence is Large ribosomal subunit protein bL19 (118 aa).

This sequence belongs to the bacterial ribosomal protein bL19 family.

In terms of biological role, this protein is located at the 30S-50S ribosomal subunit interface and may play a role in the structure and function of the aminoacyl-tRNA binding site. The polypeptide is Large ribosomal subunit protein bL19 (Beutenbergia cavernae (strain ATCC BAA-8 / DSM 12333 / CCUG 43141 / JCM 11478 / NBRC 16432 / NCIMB 13614 / HKI 0122)).